A 639-amino-acid chain; its full sequence is ATP-dependent zinc metalloprotease FtsH (639 aa).

Residues 1–4 (MNST) are Cytoplasmic-facing. Residues 5–25 (VKTIVFWVFILACCILLWQVF) traverse the membrane as a helical segment. Over 26–104 (QRSSNTGKEQ…TVKDNSGSPW (79 aa)) the chain is Periplasmic. Residues 105-125 (WSILIQFSPVLVLVALWFFMI) form a helical membrane-spanning segment. The Cytoplasmic portion of the chain corresponds to 126–639 (RQMQSGGNKA…GLPEGSPSPA (514 aa)). Residue 196-203 (GPPGTGKT) coordinates ATP. His418 contributes to the Zn(2+) binding site. Glu419 is a catalytic residue. Residues His422 and Asp494 each coordinate Zn(2+). The segment at 597–639 (KDLPPLKPSGGSGTATTDDVQQVLKPSSDRGAGGLPEGSPSPA) is disordered.

In the central section; belongs to the AAA ATPase family. This sequence in the C-terminal section; belongs to the peptidase M41 family. Homohexamer. Zn(2+) is required as a cofactor.

Its subcellular location is the cell inner membrane. Functionally, acts as a processive, ATP-dependent zinc metallopeptidase for both cytoplasmic and membrane proteins. Plays a role in the quality control of integral membrane proteins. The protein is ATP-dependent zinc metalloprotease FtsH of Acidobacterium capsulatum (strain ATCC 51196 / DSM 11244 / BCRC 80197 / JCM 7670 / NBRC 15755 / NCIMB 13165 / 161).